A 907-amino-acid chain; its full sequence is Glutamate receptor 1 (907 aa).

The signal sequence occupies residues 1–18 (MPYIFAFFCTGFLGAVVG). The Extracellular segment spans residues 19–536 (ANFPNNIQIG…GVFSFLDPLA (518 aa)). N-linked (GlcNAc...) asparagine glycans are attached at residues N63, N249, N257, N363, N401, and N406. An intrachain disulfide couples C75 to C323. The L-glutamate site is built by P492, T494, and R499. The chain crosses the membrane as a helical span at residues 537-557 (YEIWMCIVFAYIGVSVVLFLV). At 558–584 (SRFSPYEWHSEEFEEGRDQTTSDQSNE) the chain is on the cytoplasmic side. Residues 585–600 (FGIFNSLWFSLGAFMQ) constitute an intramembrane region (helical; Pore-forming). An intramembrane segment occupies 601 to 603 (QGC). A lipid anchor (S-palmitoyl cysteine) is attached at C603. The Cytoplasmic portion of the chain corresponds to 604 to 609 (DISPRS). The helical transmembrane segment at 610–630 (LSGRIVGGVWWFFTLIIISSY) threads the bilayer. Residues 631–805 (TANLAAFLTV…DKTSALSLSN (175 aa)) are Extracellular-facing. S645 carries the post-translational modification Phosphoserine. S668 and T669 together coordinate L-glutamate. A Phosphoserine; by PKC modification is found at S710. Residue E719 coordinates L-glutamate. Residues C732 and C787 are joined by a disulfide bond. The chain crosses the membrane as a helical span at residues 806–826 (VAGVFYILIGGLGLAMLVALI). The Cytoplasmic segment spans residues 827–907 (EFCYKSRSES…SGMPLGATGL (81 aa)). The S-palmitoyl cysteine moiety is linked to residue C829. S849 bears the Phosphoserine; by PKC, PKA and CAMK2 mark. The segment at 857 to 881 (STLPRNSGAGASGGGGSGENGRVVS) is disordered. Position 863 is a phosphoserine; by PKC, PKA and PKG/PRKG2 (S863). Over residues 866-875 (GASGGGGSGE) the composition is skewed to gly residues. The PDZ-binding motif lies at 904-907 (ATGL).

Belongs to the glutamate-gated ion channel (TC 1.A.10.1) family. GRIA1 subfamily. Homotetramer or heterotetramer of pore-forming glutamate receptor subunits; heteromeric assembly can be the result of both receptor subtype and flip-flop forms and according the composition, one partner can be dominant with respect to the fast desensitizing current component, whereas the other can determine the steady-state component. Tetramers may be formed by the dimerization of dimers. Found in a complex with GRIA2, GRIA3, GRIA4, CNIH2, CNIH3, CACNG2, CACNG3, CACNG4, CACNG5, CACNG7 and CACNG8. Interacts with HIP1 and RASGRF2. Interacts with SYNDIG1 and GRIA2. Interacts with DLG1 (via C-terminus). Interacts with LRFN1. Interacts with PRKG2. Interacts with CNIH2 and CACNG2. Interacts with CACNG5; this interaction modulates the gating. Interacts (via C-terminus) with PDLIM4 (via LIM domain); this interaction as well as the interaction of PDLIM4 with alpha-actinin is required for their colocalization in early endosomes. Interacts with SNX27 (via PDZ domain); the interaction is required for recycling to the plasma membrane when endocytosed and prevent degradation in lysosomes. Interacts (via PDZ-binding motif) with SHANK3 (via PDZ domain). Interacts with CACNG3; associates GRIA1 with the adapter protein complex 4 (AP-4) to target GRIA1 to the somatodendritic compartment of neurons. Interacts with CACNG2; this interaction mediates traffick to the plasma membrane and modulation of desensitization. Interaction with CNIH2 and CNIH3; this interaction promotes expression at the plasma membrane and extensively modulates their gating properties by slowing deactivation and desensitization kinetics. Found in a complex with GRIA2, GRIA3, GRIA4, DLG4, CACNG8 and CNIH2. Post-translationally, phosphorylated at Ser-645. Phosphorylated at Ser-710 by PKC. Phosphorylated at Ser-849 by PKC, PKA and CAMK2. Phosphorylated at Ser-863 by PKC, PKA and PRKG2. Phosphorylation of Ser-863 is reduced by induction of long-term depression and increased by induction of long-term potentiation. In terms of processing, palmitoylated. Depalmitoylated by CPT1C and upon L-glutamate stimulation. ZDHHC3/GODZ specifically palmitoylates Cys-603, which leads to Golgi retention and decreased cell surface expression. In contrast, Cys-829 palmitoylation does not affect cell surface expression but regulates stimulation-dependent endocytosis. Detected in cerebellum (at protein level).

The protein localises to the cell membrane. It localises to the endoplasmic reticulum membrane. It is found in the postsynaptic cell membrane. Its subcellular location is the postsynaptic density membrane. The protein resides in the cell projection. The protein localises to the dendrite. It localises to the dendritic spine. It is found in the early endosome membrane. Its subcellular location is the recycling endosome membrane. The protein resides in the presynapse. The protein localises to the synapse. It carries out the reaction Ca(2+)(in) = Ca(2+)(out). The catalysed reaction is Na(+)(in) = Na(+)(out). The enzyme catalyses Mg(2+)(in) = Mg(2+)(out). It catalyses the reaction Li(+)(in) = Li(+)(out). It carries out the reaction K(+)(in) = K(+)(out). The catalysed reaction is Sr(2+)(in) = Sr(2+)(out). Glutamate-gated receptor activity inhibited by DNQX (6,7-dinitroquinoxaline-2,3-dione). In terms of biological role, ionotropic glutamate receptor that functions as a ligand-gated cation channel, gated by L-glutamate and glutamatergic agonists such as alpha-amino-3-hydroxy-5-methyl-4-isoxazolepropionic acid (AMPA), quisqualic acid, and kainic acid. L-glutamate acts as an excitatory neurotransmitter at many synapses in the central nervous system. Binding of the excitatory neurotransmitter L-glutamate induces a conformation change, leading to the opening of the cation channel, and thereby converts the chemical signal to an electrical impulse upon entry of monovalent and divalent cations such as sodium and calcium. The receptor then desensitizes rapidly and enters in a transient inactive state, characterized by the presence of bound agonist. In the presence of CACNG2 or CACNG4 or CACNG7 or CACNG8, shows resensitization which is characterized by a delayed accumulation of current flux upon continued application of L-glutamate. Resensitization is blocked by CNIH2 through interaction with CACNG8 in the CACNG8-containing AMPA receptors complex. Calcium (Ca(2+)) permeability depends on subunits composition and, heteromeric channels containing edited GRIA2 subunit are calcium-impermeable. Also permeable to other divalents cations such as strontium(2+) and magnesium(2+) and monovalent cations such as potassium(1+) and lithium(1+). The chain is Glutamate receptor 1 from Rattus norvegicus (Rat).